The chain runs to 172 residues: 3-hydroxydecanoyl-[acyl-carrier-protein] dehydratase (172 aa).

His71 is a catalytic residue.

It belongs to the thioester dehydratase family. FabA subfamily. As to quaternary structure, homodimer.

Its subcellular location is the cytoplasm. It carries out the reaction a (3R)-hydroxyacyl-[ACP] = a (2E)-enoyl-[ACP] + H2O. The catalysed reaction is (3R)-hydroxydecanoyl-[ACP] = (2E)-decenoyl-[ACP] + H2O. The enzyme catalyses (2E)-decenoyl-[ACP] = (3Z)-decenoyl-[ACP]. It participates in lipid metabolism; fatty acid biosynthesis. Functionally, necessary for the introduction of cis unsaturation into fatty acids. Catalyzes the dehydration of (3R)-3-hydroxydecanoyl-ACP to E-(2)-decenoyl-ACP and then its isomerization to Z-(3)-decenoyl-ACP. Can catalyze the dehydratase reaction for beta-hydroxyacyl-ACPs with saturated chain lengths up to 16:0, being most active on intermediate chain length. This chain is 3-hydroxydecanoyl-[acyl-carrier-protein] dehydratase, found in Escherichia fergusonii (strain ATCC 35469 / DSM 13698 / CCUG 18766 / IAM 14443 / JCM 21226 / LMG 7866 / NBRC 102419 / NCTC 12128 / CDC 0568-73).